The chain runs to 921 residues: Protein translocase subunit SecA (921 aa).

Residues Q86, 104–108, and D497 contribute to the ATP site; that span reads GEGKT. Residues 829 to 838 show a composition bias toward low complexity; it reads QQAPQQQPQQ. Residues 829 to 921 form a disordered region; that stretch reads QQAPQQQPQQ…CHGAIETQKA (93 aa). The span at 839–855 shows a compositional bias: pro residues; it reads VAPPPRPQPPQPAPQPP. Zn(2+) is bound by residues C901, C903, C912, and H913.

The protein belongs to the SecA family. In terms of assembly, monomer and homodimer. Part of the essential Sec protein translocation apparatus which comprises SecA, SecYEG and auxiliary proteins SecDF-YajC and YidC. Zn(2+) serves as cofactor.

Its subcellular location is the cell inner membrane. The protein resides in the cytoplasm. The catalysed reaction is ATP + H2O + cellular proteinSide 1 = ADP + phosphate + cellular proteinSide 2.. Its function is as follows. Part of the Sec protein translocase complex. Interacts with the SecYEG preprotein conducting channel. Has a central role in coupling the hydrolysis of ATP to the transfer of proteins into and across the cell membrane, serving both as a receptor for the preprotein-SecB complex and as an ATP-driven molecular motor driving the stepwise translocation of polypeptide chains across the membrane. The polypeptide is Protein translocase subunit SecA (Hyphomonas neptunium (strain ATCC 15444)).